The primary structure comprises 270 residues: tRNA pseudouridine synthase A (270 aa).

The active-site Nucleophile is the aspartate 52. Tyrosine 110 is a binding site for substrate.

The protein belongs to the tRNA pseudouridine synthase TruA family. In terms of assembly, homodimer.

It carries out the reaction uridine(38/39/40) in tRNA = pseudouridine(38/39/40) in tRNA. Its function is as follows. Formation of pseudouridine at positions 38, 39 and 40 in the anticodon stem and loop of transfer RNAs. The polypeptide is tRNA pseudouridine synthase A (Paraburkholderia phytofirmans (strain DSM 17436 / LMG 22146 / PsJN) (Burkholderia phytofirmans)).